The following is a 475-amino-acid chain: Adenylyl cyclase-associated protein 1 (475 aa).

The residue at position 2 (A2) is an N-acetylalanine. Y31 bears the Phosphotyrosine mark. S34 carries the post-translational modification Phosphoserine. The residue at position 81 (K81) is an N6-acetyllysine. Disordered regions lie at residues 216–255 and 278–318; these read ELSG…ASRS and MKTH…TKKE. Low complexity predominate over residues 218-228; sequence SGLPSGPSAGS. A compositionally biased stretch (pro residues) spans 229 to 242; the sequence is GPPPPPPGPPPPPV. The span at 243–255 shows a compositional bias: low complexity; that stretch reads STSSGSDESASRS. K287 is subject to N6-methyllysine. 3 positions are modified to phosphoserine: S290, S295, and S301. T307 is subject to Phosphothreonine. Phosphoserine is present on residues S308 and S310. In terms of domain architecture, C-CAP/cofactor C-like spans 313 to 453; that stretch reads PATKKEPAVL…EGGDFNEFPV (141 aa). Residue K348 forms a Glycyl lysine isopeptide (Lys-Gly) (interchain with G-Cter in SUMO1) linkage.

Belongs to the CAP family. Homodimer. Binds actin monomers.

The protein resides in the cell membrane. Its function is as follows. Directly regulates filament dynamics and has been implicated in a number of complex developmental and morphological processes, including mRNA localization and the establishment of cell polarity. The protein is Adenylyl cyclase-associated protein 1 (CAP1) of Pongo abelii (Sumatran orangutan).